A 120-amino-acid polypeptide reads, in one-letter code: Glycine cleavage system H protein (120 aa).

A Lipoyl-binding domain is found at 19-101 (DGTVGISDFA…YTDGWLFRLD (83 aa)). Lys60 carries the post-translational modification N6-lipoyllysine.

Belongs to the GcvH family. As to quaternary structure, the glycine cleavage system is composed of four proteins: P, T, L and H. (R)-lipoate serves as cofactor.

Functionally, the glycine cleavage system catalyzes the degradation of glycine. The H protein shuttles the methylamine group of glycine from the P protein to the T protein. The protein is Glycine cleavage system H protein of Deinococcus geothermalis (strain DSM 11300 / CIP 105573 / AG-3a).